The primary structure comprises 479 residues: F-box protein At5g51380 (479 aa).

The tract at residues 1–20 (MTFREKMPTSPKSPLRRRRS) is disordered. The region spanning 62–108 (DRTLSLSDSLLLKILEKLPESQNEDVSLVCKRWLSVQGRRLRSMKVF) is the F-box domain.

This is F-box protein At5g51380 from Arabidopsis thaliana (Mouse-ear cress).